Reading from the N-terminus, the 1081-residue chain is Histone demethylase-like protein A (1081 aa).

The disordered stretch occupies residues 37-173; it reads QHLQHPSLPN…LSGNTDYARY (137 aa). A compositionally biased stretch (low complexity) spans 66–81; the sequence is SPSCNESNESNGETSS. The span at 119–132 shows a compositional bias: polar residues; sequence DTSNILSGSATSVS. A compositionally biased stretch (low complexity) spans 141-161; sequence NSTPPSTVNNVPSSSSITSDS. Residues 192 to 287 form the SWIRM domain; it reads CVTAAYACRL…FGCVEIPPAL (96 aa). A disordered region spans residues 902–940; it reads ATAQKKKEPPCSNGFSAPVSTSAHPTDASAPARSNNSFS. The span at 914-925 shows a compositional bias: polar residues; sequence NGFSAPVSTSAH. A DNA-binding region (HMG box) is located at residues 969-1049; sequence ARTGLNPFLL…TNTEIWDRWK (81 aa).

Belongs to the flavin monoamine oxidase family.

The protein localises to the nucleus. Its function is as follows. H3K4 demethylase-like protein. Might not act as a H3K4 demethylase or is not the major H3K4 demethylase since its deletion does not affect whole genome H3K4 methylation. This Aspergillus fumigatus (strain ATCC MYA-4609 / CBS 101355 / FGSC A1100 / Af293) (Neosartorya fumigata) protein is Histone demethylase-like protein A.